Consider the following 545-residue polypeptide: Glucose-6-phosphate isomerase (545 aa).

The Proton donor role is filled by glutamate 351. Active-site residues include histidine 382 and lysine 510.

The protein belongs to the GPI family.

It is found in the cytoplasm. It catalyses the reaction alpha-D-glucose 6-phosphate = beta-D-fructose 6-phosphate. The protein operates within carbohydrate biosynthesis; gluconeogenesis. Its pathway is carbohydrate degradation; glycolysis; D-glyceraldehyde 3-phosphate and glycerone phosphate from D-glucose: step 2/4. Catalyzes the reversible isomerization of glucose-6-phosphate to fructose-6-phosphate. The sequence is that of Glucose-6-phosphate isomerase from Shewanella pealeana (strain ATCC 700345 / ANG-SQ1).